Consider the following 690-residue polypeptide: Proprotein convertase subtilisin/kexin type 9 (690 aa).

An N-terminal signal peptide occupies residues 1-28; the sequence is MGTVRSRRLWWPLPLLLLLLRGPAGARA. The propeptide occupies 29–150; sequence QEDDDGDYEE…IEEDSYVFAQ (122 aa). Tyr-36 carries the post-translational modification Sulfotyrosine. Ser-45 is subject to Phosphoserine. Positions 75-147 constitute an Inhibitor I9 domain; sequence TYVVVLKEET…VDYIEEDSYV (73 aa). Positions 153-459 constitute a Peptidase S8 domain; it reads PWNLERITPA…GWQLFCRTVW (307 aa). Residues Asp-184 and His-224 each act as charge relay system in the active site. 2 cysteine pairs are disulfide-bonded: Cys-221–Cys-253 and Cys-321–Cys-356. Ser-384 acts as the Charge relay system in catalysis. The segment at 448-690 is C-terminal domain; it reads GAGWQLFCRT…HLAQASQELQ (243 aa). 3 disulfide bridges follow: Cys-455/Cys-525, Cys-475/Cys-524, and Cys-484/Cys-507. Asn-531 is a glycosylation site (N-linked (GlcNAc...) asparagine). Cystine bridges form between Cys-532–Cys-599, Cys-550–Cys-598, Cys-560–Cys-586, Cys-606–Cys-677, Cys-624–Cys-676, and Cys-633–Cys-652. A Phosphoserine modification is found at Ser-686.

Belongs to the peptidase S8 family. As to quaternary structure, monomer. Can self-associate to form dimers and higher multimers which may have increased LDLR degrading activity. The precursor protein but not the mature protein may form multimers. Interacts with APOB, VLDLR, LRP8/APOER2 and BACE1. The full-length immature form (pro-PCSK9) interacts with SCNN1A, SCNN1B and SCNN1G. The pro-PCSK9 form (via C-terminal domain) interacts with LDLR. Interacts (via the C-terminal domain) with ANXA2 (via repeat Annexin 1); the interaction inhibits the degradation of LDLR. Ca(2+) serves as cofactor. Cleavage by furin and PCSK5 generates a truncated inactive protein that is unable to induce LDLR degradation. In terms of processing, undergoes autocatalytic cleavage in the endoplasmic reticulum to release the propeptide from the N-terminus and the cleavage of the propeptide is strictly required for its maturation and activation. The cleaved propeptide however remains associated with the catalytic domain through non-covalent interactions, preventing potential substrates from accessing its active site. As a result, it is secreted from cells as a propeptide-containing, enzymatically inactive protein. Post-translationally, phosphorylation protects the propeptide against proteolysis.

The protein resides in the cytoplasm. The protein localises to the secreted. It localises to the endosome. Its subcellular location is the lysosome. It is found in the cell surface. The protein resides in the endoplasmic reticulum. The protein localises to the golgi apparatus. Its activity is regulated as follows. Its proteolytic activity is autoinhibited by the non-covalent binding of the propeptide to the catalytic domain. Inhibited by EGTA. Its function is as follows. Crucial player in the regulation of plasma cholesterol homeostasis. Binds to low-density lipid receptor family members: low density lipoprotein receptor (LDLR), very low density lipoprotein receptor (VLDLR), apolipoprotein E receptor (LRP1/APOER) and apolipoprotein receptor 2 (LRP8/APOER2), and promotes their degradation in intracellular acidic compartments. Acts via a non-proteolytic mechanism to enhance the degradation of the hepatic LDLR through a clathrin LDLRAP1/ARH-mediated pathway. May prevent the recycling of LDLR from endosomes to the cell surface or direct it to lysosomes for degradation. Can induce ubiquitination of LDLR leading to its subsequent degradation. Inhibits intracellular degradation of APOB via the autophagosome/lysosome pathway in a LDLR-independent manner. Involved in the disposal of non-acetylated intermediates of BACE1 in the early secretory pathway. Inhibits epithelial Na(+) channel (ENaC)-mediated Na(+) absorption by reducing ENaC surface expression primarily by increasing its proteasomal degradation. Regulates neuronal apoptosis via modulation of LRP8/APOER2 levels and related anti-apoptotic signaling pathways. The protein is Proprotein convertase subtilisin/kexin type 9 (PCSK9) of Ateles geoffroyi (Black-handed spider monkey).